The chain runs to 2603 residues: Ankyrin repeat domain-containing protein 17 (2603 aa).

M1 carries the N-acetylmethionine modification. Low complexity-rich tracts occupy residues 1-34 (MEKA…AAAE) and 42-53 (SSRARSASSPRG). A disordered region spans residues 1–143 (MEKATVPVAA…SFILDQDDLE (143 aa)). A phosphoserine mark is found at S19 and S50. Positions 63–79 (KKKPPQQQHHKAKRNRT) are enriched in basic residues. The span at 84 to 94 (SSSESSSDSDN) shows a compositional bias: low complexity. A compositionally biased stretch (gly residues) spans 95–111 (SGGGGGGGGGGGGGGGT). Acidic residues predominate over residues 116 to 131 (SEEEEDDDDEEEEVSE). S156 bears the Phosphoserine mark. 15 ANK repeats span residues 233–262 (SDNR…SVNE), 266–295 (EGES…NVED), 300–329 (GDIT…DVNA), 333–362 (TGNT…SIED), 366–395 (NGHT…GINT), 400–429 (FKES…DQEH), 433–462 (EMHT…QVNM), 466–495 (SFES…SLEE), 499–528 (EGYT…NINA), 533–562 (TQET…DIEL), 563–592 (GCST…NVHA), 596–625 (TGDT…DLEH), 629–658 (GGRT…NVNR), 663–692 (NDHT…DPTH), and 696–725 (DGST…NLLS). A Glycyl lysine isopeptide (Lys-Gly) (interchain with G-Cter in SUMO2) cross-link involves residue K318. S803 is modified (phosphoserine). 10 ANK repeats span residues 1082–1111 (NHDT…SIEH), 1115–1144 (KGFT…DIEA), 1149–1178 (TKDT…NKEH), 1182–1211 (SDYT…EINS), 1217–1246 (LGIS…DINA), 1251–1280 (NRNT…NVEH), 1284–1313 (TGLT…DVNA), 1319–1348 (SRDT…HIDV), 1352–1381 (KGNT…DVDA), and 1385–1414 (RKIT…QFPS). Positions 1442 to 1526 (VQAKDRQAAE…EKEKLKVEDE (85 aa)) form a coiled coil. S1457 carries the post-translational modification Phosphoserine. Disordered stretches follow at residues 1479–1500 (AKRE…RKLE) and 1517–1717 (EKEK…QKRE). A compositionally biased stretch (basic residues) spans 1481-1491 (REKRKEKRRKK). Composition is skewed to low complexity over residues 1531 to 1550 (TEPP…TWTT), 1602 to 1611 (ESKSSSTSES), and 1620 to 1632 (SSCS…SNSS). A phosphoserine mark is found at S1635 and S1639. 2 stretches are compositionally biased toward polar residues: residues 1642–1652 (VVTTTVSSKKQ) and 1675–1703 (LSET…SPNG). Residues S1696, S1700, and S1709 each carry the phosphoserine modification. A KH domain is found at 1725-1789 (RRSKKVSVPS…ESTRQATQLI (65 aa)). Residue R1874 is modified to Asymmetric dimethylarginine. Disordered regions lie at residues 1906–1995 (PRLP…PSVR), 2011–2192 (TTVT…HKNS), and 2273–2332 (VVSS…YGSV). 2 stretches are compositionally biased toward low complexity: residues 1950 to 1995 (SNQN…PSVR) and 2011 to 2028 (TTVT…TNAT). S2042, S2044, S2045, S2047, S2059, and S2067 each carry phosphoserine. Over residues 2066–2078 (ASPNKVASSSEQE) the composition is skewed to polar residues. The span at 2095-2106 (SSSSSGSSSAHS) shows a compositional bias: low complexity. Polar residues-rich tracts occupy residues 2107-2127 (NQQQ…QQSQ) and 2273-2303 (VVSS…SDTS). Pro residues predominate over residues 2308-2318 (FRPPLQRPAPS). Phosphoserine occurs at positions 2373 and 2401. A disordered region spans residues 2381-2423 (CSSASNDSSAQSVSSGVRAPSPAPSSVPLGSEKPSNVSQDRKV). Residues 2382 to 2411 (SSASNDSSAQSVSSGVRAPSPAPSSVPLGS) are compositionally biased toward low complexity.

Interacts (via N-terminus) with NOD2. Interacts with CDK2, MCM3, MCM5, MCM7, CDC6 and PCNA. Interacts with MAVS and IFIH1. Interacts (via the second ankyrin repeat cluster) with DDX58. As to quaternary structure, (Microbial infection) Interacts with enterovirus 71/EV71 capsid protein VP1. In terms of processing, phosphorylated by CDK2. In terms of tissue distribution, ubiquitously expressed.

It is found in the cytoplasm. The protein localises to the nucleus. Could play pivotal roles in cell cycle and DNA regulation. Involved in innate immune defense against viruse by positively regulating the viral dsRNA receptors DDX58 and IFIH1 signaling pathways. Involves in NOD2- and NOD1-mediated responses to bacteria suggesting a role in innate antibacterial immune pathways too. Target of enterovirus 71 which is the major etiological agent of HFMD (hand, foot and mouth disease). Could play a central role for the formation and/or maintenance of the blood vessels of the circulation system. This chain is Ankyrin repeat domain-containing protein 17 (ANKRD17), found in Homo sapiens (Human).